A 445-amino-acid polypeptide reads, in one-letter code: D-serine transporter DsdX (445 aa).

Residues 1–4 lie on the Cytoplasmic side of the membrane; it reads MHSQ. Residues 5-25 traverse the membrane as a helical segment; it reads IWVVSTLLISIVLIVLTIVKF. Residues 26–28 are Periplasmic-facing; it reads KFH. The helical transmembrane segment at 29-49 threads the bilayer; it reads PFLALLLASFFVGTMMGMGPL. Topologically, residues 50 to 56 are cytoplasmic; the sequence is DMVNAIE. The helical transmembrane segment at 57–77 threads the bilayer; it reads SGIGGTLGFLAAVIGLGTILG. Residues 78–105 are Periplasmic-facing; it reads KMMEVSGAAERIGLTLQRCRWLSVDVIM. The chain crosses the membrane as a helical span at residues 106 to 126; that stretch reads VLVGLICGITLFVEVGVVLLI. The Cytoplasmic portion of the chain corresponds to 127–139; sequence PLAFSIAKKTNTS. Residues 140–160 traverse the membrane as a helical segment; sequence LLKLAIPLCTALMAVHCVVPP. Over 161-177 the chain is Periplasmic; sequence HPAALYVANKLGADIGS. A helical transmembrane segment spans residues 178 to 198; it reads VIVYGLLVGLMASLIGGPLFL. At 199 to 223 the chain is on the cytoplasmic side; it reads KFLGQRLPFKPVPTEFADLKVRDEK. Residues 224–244 form a helical membrane-spanning segment; that stretch reads TLPSLGATLFTILLPIALMLV. Residues 245–257 lie on the Periplasmic side of the membrane; sequence KTIAELNMARESG. A helical membrane pass occupies residues 258-278; the sequence is LYILVEFIGNPITAMFIAVFV. The Cytoplasmic portion of the chain corresponds to 279–301; that stretch reads AYYVLGIRQHMSMGTMLTHTENG. The chain crosses the membrane as a helical span at residues 302–322; the sequence is FGSIANILLIIGAGGAFNAIL. The Periplasmic portion of the chain corresponds to 323-342; sequence KSSSLADTLAVILSNMHMHP. A run of 3 helical transmembrane segments spans residues 343 to 363, 364 to 384, and 385 to 405; these read ILLA…ATVA, MMGA…ISPE, and IIAI…DSLF. Residues 406 to 424 are Cytoplasmic-facing; the sequence is WLVKQYCGATLNETFKYYT. A helical transmembrane segment spans residues 425–445; sequence TATFIASVVALAGTFLLSFII.

This sequence belongs to the GntP permease family.

It is found in the cell inner membrane. Functionally, a D-serine-specific transporter, may function as a H(+) symporter. The protein is D-serine transporter DsdX of Escherichia coli (strain K12).